A 505-amino-acid chain; its full sequence is tRNA-2-methylthio-N(6)-dimethylallyladenosine synthase (505 aa).

The segment at 1 to 39 (MGQKAKAQAPTTHPRPHTLSSQVAPALPRRPRHAAPESL) is disordered. In terms of domain architecture, MTTase N-terminal spans 47–162 (MKAHLITYGC…IGAALESNER (116 aa)). The [4Fe-4S] cluster site is built by C56, C92, C125, C194, C198, and C201. The 234-residue stretch at 180–413 (PSGKLQAHLT…IARQKDWSAR (234 aa)) folds into the Radical SAM core domain. In terms of domain architecture, TRAM spans 416–479 (AQKVGTVQQV…PHMMYGHILG (64 aa)).

It belongs to the methylthiotransferase family. MiaB subfamily. In terms of assembly, monomer. The cofactor is [4Fe-4S] cluster.

The protein localises to the cytoplasm. The catalysed reaction is N(6)-dimethylallyladenosine(37) in tRNA + (sulfur carrier)-SH + AH2 + 2 S-adenosyl-L-methionine = 2-methylsulfanyl-N(6)-dimethylallyladenosine(37) in tRNA + (sulfur carrier)-H + 5'-deoxyadenosine + L-methionine + A + S-adenosyl-L-homocysteine + 2 H(+). Catalyzes the methylthiolation of N6-(dimethylallyl)adenosine (i(6)A), leading to the formation of 2-methylthio-N6-(dimethylallyl)adenosine (ms(2)i(6)A) at position 37 in tRNAs that read codons beginning with uridine. The chain is tRNA-2-methylthio-N(6)-dimethylallyladenosine synthase from Deinococcus radiodurans (strain ATCC 13939 / DSM 20539 / JCM 16871 / CCUG 27074 / LMG 4051 / NBRC 15346 / NCIMB 9279 / VKM B-1422 / R1).